The primary structure comprises 688 residues: DNA-directed RNA polymerase subunit beta' (688 aa).

Positions 69, 71, 87, and 90 each coordinate Zn(2+). 3 residues coordinate Mg(2+): Asp497, Asp499, and Asp501.

Belongs to the RNA polymerase beta' chain family. RpoC1 subfamily. As to quaternary structure, in plastids the minimal PEP RNA polymerase catalytic core is composed of four subunits: alpha, beta, beta', and beta''. When a (nuclear-encoded) sigma factor is associated with the core the holoenzyme is formed, which can initiate transcription. Mg(2+) serves as cofactor. The cofactor is Zn(2+).

It is found in the plastid. The protein resides in the chloroplast. The enzyme catalyses RNA(n) + a ribonucleoside 5'-triphosphate = RNA(n+1) + diphosphate. Its function is as follows. DNA-dependent RNA polymerase catalyzes the transcription of DNA into RNA using the four ribonucleoside triphosphates as substrates. In Sinapis alba (White mustard), this protein is DNA-directed RNA polymerase subunit beta'.